The chain runs to 98 residues: Transcription elongation factor A protein-like 7 (98 aa).

Basic and acidic residues predominate over residues 1–24 (MQRSCNEKEGKPKCSEPKREEEHP). Residues 1–31 (MQRSCNEKEGKPKCSEPKREEEHPYGAFEGQ) are disordered. Residues 59–89 (GEEMTGEEEEMERCLEEIRSLRKKFRALHSN) are a coiled coil.

Belongs to the TFS-II family. TFA subfamily.

Its subcellular location is the nucleus. Functionally, plays a role in the negative regulation of NF-kappa-B signaling at the basal level by modulating transcriptional activity of NF-kappa-B on its target gene promoters. Associates with cyclin D1 promoter containing Myc E-box sequence and transcriptionally represses cyclin D1 expression. Regulates telomerase reverse transcriptase expression and telomerase activity in both ALT (alternative lengthening of telomeres)and telomerase-positive cell lines. This Rattus norvegicus (Rat) protein is Transcription elongation factor A protein-like 7 (Tceal7).